The primary structure comprises 840 residues: Lethal(3)malignant brain tumor-like protein 1 (840 aa).

At Ser-117 the chain carries Phosphoserine. Residues 127–269 form a disordered region; that stretch reads EYEDGGAPAG…WSSSQPATGE (143 aa). Over residues 156 to 165 the composition is skewed to acidic residues; the sequence is PNQDPPEDDS. Residues 200–210 are compositionally biased toward polar residues; it reads VENSSGSTSAS. Positions 236–247 are enriched in basic and acidic residues; sequence AMEKQEEGKDPE. A compositionally biased stretch (polar residues) spans 250–266; sequence PTASTPESEEWSSSQPA. 3 MBT repeats span residues 274 to 374, 382 to 481, and 490 to 585; these read WSWE…LQPP, FSWS…LTPP, and FCWE…LQPP. Residues 447-454 are interaction with monomethylated and dimethylated peptides; sequence FDNWDDTY. The segment at 580-605 is disordered; sequence HPLQPPLGPREPSSASPGGCPPLSYR. The CCHHC-type zinc finger occupies 613–656; sequence SKYSFHHRKCPTPGCDGSGHVTGKFTAHHCLSGCPLAERNQSRL. Cys-622, Cys-627, His-640, and Cys-646 together coordinate Zn(2+). Residues 657-697 form a disordered region; it reads KAELSDSEASARKKNLSGFSPRKKPRHHGRIGRPPKYRKIP. Residues 677-695 show a composition bias toward basic residues; that stretch reads PRKKPRHHGRIGRPPKYRK.

Homodimer. Interacts with RB1/RB (when monomethylated at 'Lys-860'). Interacts with p53/TP53 (when monomethylated at 'Lys-382'). Interacts with CBX3, ETV6, KMT5A and VCP/p97. In terms of processing, ubiquitinated in a VCP/p97-dependent way following DNA damage, leading to its removal from DNA damage sites, promoting accessibility of H4K20me2 mark for DNA repair protein TP53BP1, which is then recruited to DNA damage sites. As to expression, widely expressed. Expression is reduced in colorectal cancer cell line SW480 and promyelocytic leukemia cell line HL-60.

The protein localises to the nucleus. Polycomb group (PcG) protein that specifically recognizes and binds mono- and dimethyllysine residues on target proteins, thereby acting as a 'reader' of a network of post-translational modifications. PcG proteins maintain the transcriptionally repressive state of genes: acts as a chromatin compaction factor by recognizing and binding mono- and dimethylated histone H1b/H1-4 at 'Lys-26' (H1bK26me1 and H1bK26me2) and histone H4 at 'Lys-20' (H4K20me1 and H4K20me2), leading to condense chromatin and repress transcription. Recognizes and binds p53/TP53 monomethylated at 'Lys-382', leading to repress p53/TP53-target genes. Also recognizes and binds RB1/RB monomethylated at 'Lys-860'. Participates in the ETV6-mediated repression. Probably plays a role in cell proliferation. Overexpression induces multinucleated cells, suggesting that it is required to accomplish normal mitosis. In Homo sapiens (Human), this protein is Lethal(3)malignant brain tumor-like protein 1 (L3MBTL1).